Here is a 266-residue protein sequence, read N- to C-terminus: Beta-lactamase OXA-19 (266 aa).

The signal sequence occupies residues Met1–Ser20. Residue Ser67 is the Acyl-ester intermediate of the active site. At Lys70 the chain carries N6-carboxylysine. Lys205–Gly207 lines the substrate pocket.

This sequence belongs to the class-D beta-lactamase family.

It catalyses the reaction a beta-lactam + H2O = a substituted beta-amino acid. This Pseudomonas aeruginosa protein is Beta-lactamase OXA-19 (bla).